A 404-amino-acid polypeptide reads, in one-letter code: Deoxyguanosinetriphosphate triphosphohydrolase-like protein (404 aa).

The segment at 1–33 (MSVGMAAPRAAFSCDPDRSRGRQFAEPPSSNRS) is disordered. The region spanning 69-217 (RLTHSLEVAQ…AALADDIAYD (149 aa)) is the HD domain.

It belongs to the dGTPase family. Type 2 subfamily.

In Rhodopseudomonas palustris (strain HaA2), this protein is Deoxyguanosinetriphosphate triphosphohydrolase-like protein.